The primary structure comprises 1744 residues: Transcription initiation factor TFIID subunit 1 (1744 aa).

Disordered stretches follow at residues 1–65 (MNNT…EKNE), 248–275 (VSIR…APNS), 429–488 (PEDR…DNDP), 1001–1024 (QNQT…DSDN), 1071–1098 (TTNQ…SQFG), and 1186–1213 (MKKN…PPNP). A compositionally biased stretch (polar residues) spans 43–52 (ACSSASNGGS). Residues 55-64 (VKMEPKVEKN) show a composition bias toward basic and acidic residues. Over residues 429 to 439 (PEDRRHDEGPD) the composition is skewed to basic and acidic residues. Residues 440 to 449 (HHHHHHHHRK) show a composition bias toward basic residues. Residues 477-488 (ESTMAQFTDNDP) are compositionally biased toward polar residues. The span at 1012-1024 (STDDDSTDADSDN) shows a compositional bias: acidic residues. Coiled coils occupy residues 1019–1080 (DADS…KGEK), 1161–1204 (YAQM…TEKK), and 1282–1314 (NFAE…RQMA). Basic and acidic residues-rich tracts occupy residues 1076 to 1093 (EKGE…EKKS) and 1186 to 1205 (MKKN…EKKV). The segment covering 1319 to 1344 (YGGGASSSGGAGGGGSGIGGSTGGGI) has biased composition (gly residues). A disordered region spans residues 1319 to 1391 (YGGGASSSGG…SKRRSSMMPE (73 aa)). A compositionally biased stretch (polar residues) spans 1354 to 1363 (SQISGTSSFL). Low complexity predominate over residues 1372–1381 (GGNRNSSVSG). Positions 1379-1386 (VSGSKRRS) match the Nuclear localization signal motif. Bromo domains follow at residues 1404–1512 (RARA…MIER) and 1537–1634 (YLLG…VKDQ). Positions 1666-1694 (DHMDEMEDHPTEEEEEDDDDEIMDDDMDI) are enriched in acidic residues. 2 disordered regions span residues 1666-1702 (DHMD…YSYD) and 1714-1744 (NDLA…LDSF).

The protein belongs to the TAF1 family. In terms of assembly, component of the TFIID basal transcription factor complex, composed of TATA-box-binding protein tbp-1, and a number of TBP-associated factors (TAFs).

Its subcellular location is the nucleus. Functionally, the TFIID basal transcription factor complex plays a major role in the initiation of RNA polymerase II (Pol II)-dependent transcription. TFIID recognizes and binds promoters via its subunit tbp-1, a TATA-box-binding protein, and promotes assembly of the pre-initiation complex (PIC). The TFIID complex consists of tbp-1 and TBP-associated factors (TAFs), including taf-1. May regulate RNA polymerase II activity and thereby may control transcription initiation by RNA polymerase II. Required for early embryonic development. Essential for embryonic transcription of several genes. The sequence is that of Transcription initiation factor TFIID subunit 1 from Caenorhabditis elegans.